The chain runs to 165 residues: Large ribosomal subunit protein uL10 (165 aa).

The protein belongs to the universal ribosomal protein uL10 family. In terms of assembly, part of the ribosomal stalk of the 50S ribosomal subunit. The N-terminus interacts with L11 and the large rRNA to form the base of the stalk. The C-terminus forms an elongated spine to which L12 dimers bind in a sequential fashion forming a multimeric L10(L12)X complex.

Its function is as follows. Forms part of the ribosomal stalk, playing a central role in the interaction of the ribosome with GTP-bound translation factors. The chain is Large ribosomal subunit protein uL10 from Pectobacterium carotovorum subsp. carotovorum (strain PC1).